The primary structure comprises 543 residues: MNTEPSPNHYSAISSSDQNLTRRSGNYQPTMWDFEYIQSIHNDYAGDKYMKRFNELKEEMKKMIMAEGSQELEKLELIDNLQRLGVSYHFKHEIMQILSSIKQHSTPADSLYATALKFRLLREHGFHISQEIFDGLSETHTKDTKGMLYLYEASFLATEGESELEQAWTEKHLREYLKNKNIDQNVAKLVHRALELPLHWRMLRLEARWFISFYKKRQDMIPLLLELAILDFNIVQAAHIQDLKYVARWWKETGLAENLPFARDRLVENFFWTIGVNFLPQYGYFRRIETKVNALVTTIDDVYDVFGTLDELQCFTDAIQRWNTDELDNLPDNMKMCYFALDDFINEVACDALIVPYLRNAWTDLCKSYLIEAKWYFSKYIPTMEEYMDNAWISISAPVILVHAYFLIANPVNKEALHYLRNYHDIIRWSALILRLANDLGTSSDELKRGDVPKSIQCYMNEKKVSEEEARQHIRLLISETWKKLNEAHNVAAHPFPKMFVKSAMNLARMAQCMYQHGDGHGGQNSETQNRIMALLFESIPPA.

Residues M1–R22 form a disordered region. (2E)-geranyl diphosphate contacts are provided by R263, D300, D304, R435, and N438. The Mg(2+) site is built by D300 and D304. The DDXXD motif signature appears at D300–D304. 3 residues coordinate Mg(2+): N438, T442, and E446.

This sequence belongs to the terpene synthase family. Tpsb subfamily. In terms of assembly, monomer. Requires Mg(2+) as cofactor. Mn(2+) is required as a cofactor. In terms of tissue distribution, confined to flowers.

It is found in the plastid. Its subcellular location is the chloroplast. The catalysed reaction is (2E)-geranyl diphosphate + H2O = (S)-alpha-terpineol + diphosphate. The enzyme catalyses (2E)-geranyl diphosphate = sabinene + diphosphate. It carries out the reaction (2E)-geranyl diphosphate = beta-myrcene + diphosphate. It catalyses the reaction (2E)-geranyl diphosphate = limonene + diphosphate. The catalysed reaction is (2E)-geranyl diphosphate + H2O = 1,8-cineole + diphosphate. Its pathway is secondary metabolite biosynthesis; terpenoid biosynthesis. In terms of biological role, monoterpene synthase (TPS) involved in the biosynthesis of monoterpene natural products of the 'cineole cassette', volatile compounds present in floral scent. Catalyzes the conversion of (2E)-geranyl diphosphate (GPP) into alpha-terpineol and, as minor products, sabinene, beta-myrcene, limonene and 1,8-cineole. The sequence is that of Terpineol synthase, chloroplastic from Nicotiana alata (Winged tobacco).